The primary structure comprises 658 residues: Interferon-induced GTP-binding protein Mx1 (658 aa).

Residue methionine 1 is modified to N-acetylmethionine. The disordered stretch occupies residues 1 to 20; sequence MVNSKGKITDSDPGSSHLLL. Residues 65–338 form the Dynamin-type G domain; the sequence is DLALPAIAVI…LITHICKTLP (274 aa). The tract at residues 75–82 is G1 motif; that stretch reads GDQSSGKS. Position 75–82 (75–82) interacts with GTP; it reads GDQSSGKS. Residues 100-102 form a G2 motif region; sequence VTR. Residues 176-179 are G3 motif; sequence DLPG. GTP-binding positions include 176–180 and 245–248; these read DLPGI and TKPD. Positions 245–248 are G4 motif; sequence TKPD. Residues 277–280 are G5 motif; the sequence is KCRG. Positions 339–364 are bundle signaling element (BSE); sequence LLEKQIKENYEKITEELQKYGSDVPE. The segment at 364–531 is middle domain; the sequence is EEEHEKMFFL…HFQMEQIVYC (168 aa). A stalk region spans residues 365–628; that stretch reads EEHEKMFFLI…KDTHNWLLKE (264 aa). The segment at 551–554 is critical for lipid-binding; the sequence is KDKK. Residues 570–658 enclose the GED domain; it reads LSDIFEHLLA…ARRRLAKFPG (89 aa).

It belongs to the TRAFAC class dynamin-like GTPase superfamily. Dynamin/Fzo/YdjA family. Homooligomer. Oligomerizes into multimeric filamentous or ring-like structures by virtue of its stalk domain. Oligomerization is critical for GTPase activity, protein stability, and recognition of viral target structures. Interacts with TRPC1, TRPC3, TRPC4, TRPC5, TRPC6 and TRPC7. Interacts with HSPA5. Interacts with TUBB/TUBB5. Interacts with DDX39A and DDX39B. Post-translationally, ISGylated.

It localises to the cytoplasm. It is found in the endoplasmic reticulum membrane. The protein resides in the perinuclear region. Functionally, interferon-induced dynamin-like GTPase with antiviral activity. The chain is Interferon-induced GTP-binding protein Mx1 (MX1) from Otaria byronia (South American sea lion).